Consider the following 884-residue polypeptide: Bifunctional heparan sulfate N-deacetylase/N-sulfotransferase 2 (884 aa).

Residues Met-1–Arg-18 lie on the Cytoplasmic side of the membrane. Residues Leu-19–Ser-39 form a helical; Signal-anchor for type II membrane protein membrane-spanning segment. Over Thr-40–Gly-884 the chain is Lumenal. Residues Ser-41–Glu-598 are heparan sulfate N-deacetylase 2. The segment at Pro-49–Ala-82 is disordered. Pro residues predominate over residues Pro-66 to Pro-79. Residues Asn-351 and Asn-401 are each glycosylated (N-linked (GlcNAc...) asparagine). A heparan sulfate N-sulfotransferase 2 region spans residues Lys-599 to Gly-884. The For sulfotransferase activity role is filled by Lys-614. Lys-614–Thr-618 contacts 3'-phosphoadenylyl sulfate. Asn-667 carries N-linked (GlcNAc...) asparagine glycosylation. Ser-712 contributes to the 3'-phosphoadenylyl sulfate binding site. N-linked (GlcNAc...) asparagine glycans are attached at residues Asn-727 and Asn-803. A disulfide bridge connects residues Cys-818 and Cys-828. Lys-833–Tyr-837 contacts 3'-phosphoadenylyl sulfate.

The protein belongs to the sulfotransferase 1 family. NDST subfamily. Monomer.

It is found in the golgi apparatus membrane. The enzyme catalyses alpha-D-glucosaminyl-[heparan sulfate](n) + 3'-phosphoadenylyl sulfate = N-sulfo-alpha-D-glucosaminyl-[heparan sulfate](n) + adenosine 3',5'-bisphosphate + 2 H(+). It participates in glycan metabolism; heparan sulfate biosynthesis. Its pathway is glycan metabolism; heparin biosynthesis. In terms of biological role, essential bifunctional enzyme that catalyzes both the N-deacetylation and the N-sulfation of glucosamine (GlcNAc) of the glycosaminoglycan in heparan sulfate. Modifies the GlcNAc-GlcA disaccharide repeating sugar backbone to make N-sulfated heparosan, a prerequisite substrate for later modifications in heparin biosynthesis. Plays a role in determining the extent and pattern of sulfation of heparan sulfate. Required for the exosomal release of SDCBP, CD63 and syndecan. The polypeptide is Bifunctional heparan sulfate N-deacetylase/N-sulfotransferase 2 (NDST2) (Bos taurus (Bovine)).